Reading from the N-terminus, the 627-residue chain is UvrABC system protein C (627 aa).

The region spanning 22 to 100 is the GIY-YIG domain; it reads NNPGVYRMFN…IKRLRPRFNV (79 aa). The UVR domain maps to 210 to 245; sequence QSVKDHLAAAMQAASADLDFEHAAVYRDRLAALSHV.

The protein belongs to the UvrC family. In terms of assembly, interacts with UvrB in an incision complex.

It localises to the cytoplasm. The UvrABC repair system catalyzes the recognition and processing of DNA lesions. UvrC both incises the 5' and 3' sides of the lesion. The N-terminal half is responsible for the 3' incision and the C-terminal half is responsible for the 5' incision. This Brucella abortus biovar 1 (strain 9-941) protein is UvrABC system protein C.